A 469-amino-acid polypeptide reads, in one-letter code: Adenosylhomocysteinase (469 aa).

Residues T63, D139, and E164 each contribute to the substrate site. 165–167 (TTT) lines the NAD(+) pocket. Substrate-binding residues include K194 and D198. Residues N199, 228 to 233 (GYGDVG), E251, N300, 321 to 323 (IGH), and N375 each bind NAD(+).

The protein belongs to the adenosylhomocysteinase family. Requires NAD(+) as cofactor.

It localises to the cytoplasm. The enzyme catalyses S-adenosyl-L-homocysteine + H2O = L-homocysteine + adenosine. It functions in the pathway amino-acid biosynthesis; L-homocysteine biosynthesis; L-homocysteine from S-adenosyl-L-homocysteine: step 1/1. Its function is as follows. May play a key role in the regulation of the intracellular concentration of adenosylhomocysteine. In Pseudomonas putida (strain W619), this protein is Adenosylhomocysteinase.